A 431-amino-acid polypeptide reads, in one-letter code: 5-methylthioadenosine/S-adenosylhomocysteine deaminase (431 aa).

2 residues coordinate Zn(2+): H64 and H66. Substrate is bound by residues E93, R145, and H183. Residue H210 coordinates Zn(2+). The substrate site is built by E213 and D299. D299 lines the Zn(2+) pocket.

The protein belongs to the metallo-dependent hydrolases superfamily. MTA/SAH deaminase family. Requires Zn(2+) as cofactor.

It catalyses the reaction S-adenosyl-L-homocysteine + H2O + H(+) = S-inosyl-L-homocysteine + NH4(+). It carries out the reaction S-methyl-5'-thioadenosine + H2O + H(+) = S-methyl-5'-thioinosine + NH4(+). Its function is as follows. Catalyzes the deamination of 5-methylthioadenosine and S-adenosyl-L-homocysteine into 5-methylthioinosine and S-inosyl-L-homocysteine, respectively. Is also able to deaminate adenosine. This Syntrophomonas wolfei subsp. wolfei (strain DSM 2245B / Goettingen) protein is 5-methylthioadenosine/S-adenosylhomocysteine deaminase.